A 29-amino-acid chain; its full sequence is Cytochrome b6-f complex subunit 8 (29 aa).

Residues isoleucine 3 to valine 23 form a helical membrane-spanning segment.

It belongs to the PetN family. In terms of assembly, the 4 large subunits of the cytochrome b6-f complex are cytochrome b6, subunit IV (17 kDa polypeptide, PetD), cytochrome f and the Rieske protein, while the 4 small subunits are PetG, PetL, PetM and PetN. The complex functions as a dimer.

It localises to the plastid. Its subcellular location is the chloroplast thylakoid membrane. Its function is as follows. Component of the cytochrome b6-f complex, which mediates electron transfer between photosystem II (PSII) and photosystem I (PSI), cyclic electron flow around PSI, and state transitions. This Phaeodactylum tricornutum (strain CCAP 1055/1) protein is Cytochrome b6-f complex subunit 8.